A 192-amino-acid chain; its full sequence is Shikimate kinase (192 aa).

27–32 (GTGKTT) provides a ligand contact to ATP. Threonine 31 provides a ligand contact to Mg(2+). 3 residues coordinate substrate: aspartate 49, arginine 73, and glycine 95. Position 133 (arginine 133) interacts with ATP. Arginine 152 contributes to the substrate binding site.

Belongs to the shikimate kinase family. Monomer. The cofactor is Mg(2+).

The protein resides in the cytoplasm. It catalyses the reaction shikimate + ATP = 3-phosphoshikimate + ADP + H(+). It functions in the pathway metabolic intermediate biosynthesis; chorismate biosynthesis; chorismate from D-erythrose 4-phosphate and phosphoenolpyruvate: step 5/7. Its function is as follows. Catalyzes the specific phosphorylation of the 3-hydroxyl group of shikimic acid using ATP as a cosubstrate. In Hahella chejuensis (strain KCTC 2396), this protein is Shikimate kinase.